A 236-amino-acid polypeptide reads, in one-letter code: ATP synthase subunit a (236 aa).

The next 5 membrane-spanning stretches (helical) occupy residues 17–37 (WTNL…LFGL), 76–96 (SFFV…GLII), 113–133 (PVVT…AGVA), 170–190 (IFGN…MAFS), and 196–216 (MIVS…IGAI).

It belongs to the ATPase A chain family. F-type ATPases have 2 components, CF(1) - the catalytic core - and CF(0) - the membrane proton channel. CF(1) has five subunits: alpha(3), beta(3), gamma(1), delta(1), epsilon(1). CF(0) has three main subunits: a(1), b(2) and c(9-12). The alpha and beta chains form an alternating ring which encloses part of the gamma chain. CF(1) is attached to CF(0) by a central stalk formed by the gamma and epsilon chains, while a peripheral stalk is formed by the delta and b chains.

The protein resides in the cell membrane. Its function is as follows. Key component of the proton channel; it plays a direct role in the translocation of protons across the membrane. The polypeptide is ATP synthase subunit a (Limosilactobacillus fermentum (strain NBRC 3956 / LMG 18251) (Lactobacillus fermentum)).